Reading from the N-terminus, the 418-residue chain is Zinc finger protein 566 (418 aa).

The 72-residue stretch at 6-77 (VMFSDVSVDF…DRELTRGQWP (72 aa)) folds into the KRAB domain. The segment at 169 to 193 (KFCASKEYRKTFRHGSQFATHEIIH) adopts a C2H2-type 1; degenerate zinc-finger fold. 7 C2H2-type zinc fingers span residues 199-221 (YECK…QKIH), 227-249 (FECK…HRIH), 255-277 (YECK…QRIH), 283-305 (YECK…QRIH), 311-333 (YECK…QRIH), 339-361 (YECK…QRIH), and 367-389 (YECK…HRIH). Glycyl lysine isopeptide (Lys-Gly) (interchain with G-Cter in SUMO2) cross-links involve residues lysine 314 and lysine 328.

The protein belongs to the krueppel C2H2-type zinc-finger protein family.

It localises to the nucleus. In terms of biological role, may be involved in transcriptional regulation. The protein is Zinc finger protein 566 (ZNF566) of Pan troglodytes (Chimpanzee).